A 739-amino-acid polypeptide reads, in one-letter code: DNA ligase (739 aa).

Residues 34–38, 83–84, and E117 contribute to the NAD(+) site; these read DADYD and SL. Residue K119 is the N6-AMP-lysine intermediate of the active site. Residues R140, E175, K291, and K315 each coordinate NAD(+). Zn(2+) contacts are provided by C420, C423, C438, and C444. One can recognise a BRCT domain in the interval 660–739; it reads ADDSPVAGKT…DGWLDLIGQA (80 aa).

Belongs to the NAD-dependent DNA ligase family. LigA subfamily. Mg(2+) serves as cofactor. The cofactor is Mn(2+).

The catalysed reaction is NAD(+) + (deoxyribonucleotide)n-3'-hydroxyl + 5'-phospho-(deoxyribonucleotide)m = (deoxyribonucleotide)n+m + AMP + beta-nicotinamide D-nucleotide.. In terms of biological role, DNA ligase that catalyzes the formation of phosphodiester linkages between 5'-phosphoryl and 3'-hydroxyl groups in double-stranded DNA using NAD as a coenzyme and as the energy source for the reaction. It is essential for DNA replication and repair of damaged DNA. This Ruegeria sp. (strain TM1040) (Silicibacter sp.) protein is DNA ligase.